A 234-amino-acid polypeptide reads, in one-letter code: Ribose-5-phosphate isomerase A (234 aa).

Substrate is bound by residues 28–31 (TGST), 83–86 (DGAD), and 96–99 (KGGG). E105 functions as the Proton acceptor in the catalytic mechanism. K123 contributes to the substrate binding site.

The protein belongs to the ribose 5-phosphate isomerase family. In terms of assembly, homodimer.

The catalysed reaction is aldehydo-D-ribose 5-phosphate = D-ribulose 5-phosphate. Its pathway is carbohydrate degradation; pentose phosphate pathway; D-ribose 5-phosphate from D-ribulose 5-phosphate (non-oxidative stage): step 1/1. Its function is as follows. Catalyzes the reversible conversion of ribose-5-phosphate to ribulose 5-phosphate. The polypeptide is Ribose-5-phosphate isomerase A (Bartonella quintana (strain Toulouse) (Rochalimaea quintana)).